Consider the following 363-residue polypeptide: Serpentine receptor class beta-17 (363 aa).

Transmembrane regions (helical) follow at residues 46–66 (AFLLVKLYHILLSVISMGSII), 75–95 (LLAFHFNIKILFFFQFCSCFL), 120–140 (VILAPALFALFNLPLIFSMLC), 169–189 (IGFVLTSFAVIVPGLTCLYMY), 214–234 (YIFITINVLNVLTLMHSIGLY), 273–293 (CAQLIIFLLYGCAMYSLRIFL), and 304–324 (VTEFCYTPPLYCAIMPLICIV).

This sequence belongs to the nematode receptor-like protein srb family.

The protein resides in the membrane. The sequence is that of Serpentine receptor class beta-17 (srb-17) from Caenorhabditis elegans.